A 92-amino-acid polypeptide reads, in one-letter code: Acylphosphatase (92 aa).

Cys-5 and Cys-49 are joined by a disulfide. An Acylphosphatase-like domain is found at 5 to 92 (CIIAWIYGRV…SGELTDFRIR (88 aa)). Active-site residues include Arg-20 and Asn-38.

This sequence belongs to the acylphosphatase family.

It catalyses the reaction an acyl phosphate + H2O = a carboxylate + phosphate + H(+). The protein is Acylphosphatase of Escherichia coli O1:K1 / APEC.